Reading from the N-terminus, the 375-residue chain is Glycogen synthase kinase-3 homolog YGK3 (375 aa).

The Protein kinase domain maps to 41-329; that stretch reads VREGKRIGHG…ARQLMAHEFF (289 aa). ATP-binding positions include 47-55 and K74; that span reads IGHGSFGTV. D173 (proton acceptor) is an active-site residue. The residue at position 211 (S211) is a Phosphoserine.

The protein belongs to the protein kinase superfamily. Ser/Thr protein kinase family.

The enzyme catalyses L-seryl-[protein] + ATP = O-phospho-L-seryl-[protein] + ADP + H(+). The catalysed reaction is L-threonyl-[protein] + ATP = O-phospho-L-threonyl-[protein] + ADP + H(+). Required for heat stress-instigated phosphorylation of BCY1 which is involved in cell wall integrity signaling. Regulates activity of MSN2, a transcription factor that binds to the stress-response element (STRE). Probably promotes formation of a complex between MSN2 and DNA. Regulates the stability of ROG1. This Saccharomyces cerevisiae (strain ATCC 204508 / S288c) (Baker's yeast) protein is Glycogen synthase kinase-3 homolog YGK3 (YGK3).